A 170-amino-acid chain; its full sequence is Putative 4-hydroxy-4-methyl-2-oxoglutarate aldolase (170 aa).

Substrate-binding positions include 85–88 (GDMI) and Arg107. Asp108 lines the a divalent metal cation pocket.

It belongs to the class II aldolase/RraA-like family. Homotrimer. The cofactor is a divalent metal cation.

The enzyme catalyses 4-hydroxy-4-methyl-2-oxoglutarate = 2 pyruvate. The catalysed reaction is oxaloacetate + H(+) = pyruvate + CO2. In terms of biological role, catalyzes the aldol cleavage of 4-hydroxy-4-methyl-2-oxoglutarate (HMG) into 2 molecules of pyruvate. Also contains a secondary oxaloacetate (OAA) decarboxylase activity due to the common pyruvate enolate transition state formed following C-C bond cleavage in the retro-aldol and decarboxylation reactions. The chain is Putative 4-hydroxy-4-methyl-2-oxoglutarate aldolase from Acinetobacter baylyi (strain ATCC 33305 / BD413 / ADP1).